A 339-amino-acid chain; its full sequence is NADH-quinone oxidoreductase subunit H (339 aa).

9 consecutive transmembrane segments (helical) span residues 9-29 (IFPLIIIALKVVAITIPLILC), 50-70 (PNVVGPFGLLQPIADAVKLLF), 82-102 (ILFILAPMITFILSLIGWAVI), 115-135 (VGVLYILAISSLSVYGIIIAG), 161-181 (MGLVIITVLLTNGTLNLSGII), 187-207 (MPWWIDLMLLPMGVVFFISVL), 235-255 (MGFALFFLGEYANMILVSAMT), 275-295 (IPGFFWFVFKVGFLLFCFLWI), and 311-331 (GWKVFLPLTLFWVVLVSSVLV).

This sequence belongs to the complex I subunit 1 family. As to quaternary structure, NDH-1 is composed of 14 different subunits. Subunits NuoA, H, J, K, L, M, N constitute the membrane sector of the complex.

It is found in the cell inner membrane. The catalysed reaction is a quinone + NADH + 5 H(+)(in) = a quinol + NAD(+) + 4 H(+)(out). NDH-1 shuttles electrons from NADH, via FMN and iron-sulfur (Fe-S) centers, to quinones in the respiratory chain. The immediate electron acceptor for the enzyme in this species is believed to be ubiquinone. Couples the redox reaction to proton translocation (for every two electrons transferred, four hydrogen ions are translocated across the cytoplasmic membrane), and thus conserves the redox energy in a proton gradient. This subunit may bind ubiquinone. This chain is NADH-quinone oxidoreductase subunit H, found in Rickettsia conorii (strain ATCC VR-613 / Malish 7).